The sequence spans 1086 residues: NAD(P) transhydrogenase, mitochondrial (1086 aa).

Residues 1-43 (MAHLLKTVVAGCSCPFLSNLGSSKVLPGKRDFVRTLRTHQALW) constitute a mitochondrion transit peptide. The Mitochondrial matrix portion of the chain corresponds to 44–474 (CKSPVKPGIP…TVSMYTKTLT (431 aa)). An N6-acetyllysine modification is found at Lys-70. At Lys-117 the chain carries N6-succinyllysine. Residue 182–184 (RVT) participates in NAD(+) binding. An N6-succinyllysine modification is found at Lys-224. NAD(+) is bound by residues Val-237, 257-259 (DTR), and Gly-287. An N6-succinyllysine modification is found at Lys-294. NAD(+) is bound by residues Glu-300 and Leu-319. N6-succinyllysine is present on Lys-331. At Lys-397 the chain carries N6-acetyllysine. The next 4 helical transmembrane spans lie at 475 to 493 (TASVYSAGLTGMLGLGIVA), 501 to 521 (MVTTFGLAGIIGYHTVWGVTP), 527 to 546 (LMSVTNAISGLTAVGGLALM), and 558 to 578 (SLAALATFISSVNIAGGFLVT). Topologically, residues 579–595 (QRMLDMFKRPTDPPEYN) are mitochondrial matrix. The next 5 membrane-spanning stretches (helical) occupy residues 596-616 (YLYLLPGGTFVGGYLAALYGG), 622-642 (IMYLGSGLCCVGALGGLSTQG), 646-666 (LGNALGMIGVAGGLAATLGGL), 672-691 (LLAQMSGAMAMGGTIGLTIA), and 702-722 (LVAAFHSLVGLAAVLTCMAEY). At 723–739 (IVEYPHFAMDATSNFTK) the chain is on the cytoplasmic side. 5 consecutive transmembrane segments (helical) span residues 740–760 (IVAYLGTYIGGVTFSGSLVAY), 778–797 (HALNAGLLAASVGGIIPFMA), 801–819 (FTTGITCLGSVSGLSTLMG), 833–853 (VVITVLNSYSGWALCAEGFLL), and 857–879 (LLTIVGALIGSSGAILSYIMCVA). Over 880–1086 (MNRSLANVIL…QAKVRESYQK (207 aa)) the chain is Mitochondrial matrix. Residues Tyr-933, 965–970 (VAGRMP), 1007–1011 (GANDT), 1026–1027 (GM), 1042–1049 (KRSLGVGY), and 1068–1069 (DA) contribute to the NADP(+) site. N6-succinyllysine is present on Lys-1079.

In the N-terminal section; belongs to the AlaDH/PNT family. The protein in the C-terminal section; belongs to the PNT beta subunit family. Homodimer. As to expression, widely expressed with expression most readily detectable in adrenal, heart, kidney, thyroid and adipose tissues.

It is found in the mitochondrion inner membrane. It carries out the reaction NAD(+) + NADPH + H(+)(in) = NADH + NADP(+) + H(+)(out). Functionally, the transhydrogenation between NADH and NADP is coupled to respiration and ATP hydrolysis and functions as a proton pump across the membrane. May play a role in reactive oxygen species (ROS) detoxification in the adrenal gland. The chain is NAD(P) transhydrogenase, mitochondrial (Nnt) from Mus musculus (Mouse).